Consider the following 459-residue polypeptide: Phosphomethylpyrimidine synthase (459 aa).

Residues N81, M110, Y140, H176, S196–G198, D237–R240, and E276 each bind substrate. H280 is a binding site for Zn(2+). Substrate is bound at residue Y303. H344 lines the Zn(2+) pocket. Residues C424, C427, and C432 each coordinate [4Fe-4S] cluster.

Belongs to the ThiC family. The cofactor is [4Fe-4S] cluster.

The enzyme catalyses 5-amino-1-(5-phospho-beta-D-ribosyl)imidazole + S-adenosyl-L-methionine = 4-amino-2-methyl-5-(phosphooxymethyl)pyrimidine + CO + 5'-deoxyadenosine + formate + L-methionine + 3 H(+). The protein operates within cofactor biosynthesis; thiamine diphosphate biosynthesis. Its function is as follows. Catalyzes the synthesis of the hydroxymethylpyrimidine phosphate (HMP-P) moiety of thiamine from aminoimidazole ribotide (AIR) in a radical S-adenosyl-L-methionine (SAM)-dependent reaction. The chain is Phosphomethylpyrimidine synthase from Gloeobacter violaceus (strain ATCC 29082 / PCC 7421).